The sequence spans 496 residues: Cobyric acid synthase (496 aa).

Positions Thr258–Leu427 constitute a GATase cobBQ-type domain. Cys339 functions as the Nucleophile in the catalytic mechanism. Residue His419 is part of the active site.

The protein belongs to the CobB/CobQ family. CobQ subfamily.

It participates in cofactor biosynthesis; adenosylcobalamin biosynthesis. Its function is as follows. Catalyzes amidations at positions B, D, E, and G on adenosylcobyrinic A,C-diamide. NH(2) groups are provided by glutamine, and one molecule of ATP is hydrogenolyzed for each amidation. This chain is Cobyric acid synthase, found in Mycolicibacterium smegmatis (strain ATCC 700084 / mc(2)155) (Mycobacterium smegmatis).